The chain runs to 441 residues: Arginine biosynthesis bifunctional protein ArgJ, mitochondrial (441 aa).

Positions 177, 204, 215, 301, 436, and 441 each coordinate substrate. Residue threonine 215 is the Nucleophile of the active site.

Belongs to the ArgJ family. In terms of assembly, heterodimer of an alpha and a beta chain. Post-translationally, the alpha and beta chains are autoproteolytically processed from a single precursor protein within the mitochondrion.

It is found in the mitochondrion matrix. The enzyme catalyses N(2)-acetyl-L-ornithine + L-glutamate = N-acetyl-L-glutamate + L-ornithine. It catalyses the reaction L-glutamate + acetyl-CoA = N-acetyl-L-glutamate + CoA + H(+). It participates in amino-acid biosynthesis; L-arginine biosynthesis; L-ornithine and N-acetyl-L-glutamate from L-glutamate and N(2)-acetyl-L-ornithine (cyclic): step 1/1. Its pathway is amino-acid biosynthesis; L-arginine biosynthesis; N(2)-acetyl-L-ornithine from L-glutamate: step 1/4. Its function is as follows. Catalyzes two activities which are involved in the cyclic version of arginine biosynthesis: the synthesis of acetylglutamate from glutamate and acetyl-CoA, and of ornithine by transacetylation between acetylornithine and glutamate. The polypeptide is Arginine biosynthesis bifunctional protein ArgJ, mitochondrial (Lachancea thermotolerans (strain ATCC 56472 / CBS 6340 / NRRL Y-8284) (Yeast)).